The following is a 130-amino-acid chain: Hypocretin neuropeptide precursor (130 aa).

An N-terminal signal peptide occupies residues 1-32 (MNFPSTKVPWAAVTLLLLLLLPPALLSLGVDA). Residue Q33 is modified to Pyrrolidone carboxylic acid. Intrachain disulfides connect C38–C44 and C39–C46. L65 carries the post-translational modification Leucine amide. At M96 the chain carries Methionine amide. Residues 97-130 (GRRAGAELEPHPCSGRGCPTVTTTALAPRGGSGV) constitute a propeptide that is removed on maturation.

Belongs to the orexin family. Post-translationally, specific enzymatic cleavages at paired basic residues yield the different active peptides. Restricted to neuronal cell bodies of the dorsal and lateral hypothalamus.

The protein localises to the rough endoplasmic reticulum. Its subcellular location is the cytoplasmic vesicle. It is found in the synapse. Neuropeptides that play a significant role in the regulation of food intake and sleep-wakefulness, possibly by coordinating the complex behavioral and physiologic responses of these complementary homeostatic functions. A broader role in the homeostatic regulation of energy metabolism, autonomic function, hormonal balance and the regulation of body fluids, is also suggested. Its function is as follows. Binds to orexin receptors HCRTR1/OX1R and HCRTR2/OX2R with a high affinity. Stimulates food intake. Modulates pituitary luteinizing hormone secretion in an ovarian steroid-dependent manner. Functionally, binds to orexin receptor HCRTR2/OX2R only. Stimulates food intake. Modulates pituitary luteinizing hormone secretion in an ovarian steroid-dependent manner. This is Hypocretin neuropeptide precursor (Hcrt) from Mus musculus (Mouse).